The primary structure comprises 125 residues: Diol dehydratase-reactivating factor small subunit (125 aa).

Glutamate 31 contacts Mg(2+).

The protein belongs to the DdrB/PduH family. In terms of assembly, component of the DDR complex, a heterotetramer of DdrA(2)/DdrB(2). The DDR complex interacts with the diol dehydratase complex in the presence of ADP but not ATP. It depends on Mg(2+) as a cofactor.

The enzyme catalyses ATP + H2O = ADP + phosphate + H(+). Functionally, small subunit of the diol dehydratase-reactivating factor (DDR), which reactivates suicidally inhibited adenosylcobalamin-dependent diol dehydratase (DD, pddA, pddB, pddC). DDR acts as a chaperone, reactivates inactivated DD holoenzyme in the presence of ATP, Mg(2+) and free adenosylcobalamin (AdoCbl), by mediating the exchange of the tightly bound damaged cofactor AdoCbl for a free intact one. Reactivation takes place in two steps: ADP-dependent cobalamin release, and ATP-dependent dissociation of the DD apoenzyme-DDR complex. DDR has weak ATPase activity which is required for DD reactivation. Activates glycerol-inactivated, O2-inactivated holoenzyme and inactivated enzyme-cyanocobalamin complex. Also reactivates glycerol-inactivated hologlycerol dehydratase, a DD isozyme. This is Diol dehydratase-reactivating factor small subunit from Klebsiella michiganensis (strain ATCC 8724 / DSM 4798 / JCM 20051 / NBRC 3318 / NRRL B-199 / KCTC 1686 / BUCSAV 143 / CCM 1901).